The chain runs to 282 residues: NADPH-dependent 7-cyano-7-deazaguanine reductase (282 aa).

Substrate is bound at residue 88-90 (IES). 90–91 (SK) is an NADPH binding site. Residue Cys190 is the Thioimide intermediate of the active site. Residue Asp197 is the Proton donor of the active site. 229–230 (HE) lines the substrate pocket. 258 to 259 (RG) contributes to the NADPH binding site.

This sequence belongs to the GTP cyclohydrolase I family. QueF type 2 subfamily. In terms of assembly, homodimer.

It localises to the cytoplasm. It carries out the reaction 7-aminomethyl-7-carbaguanine + 2 NADP(+) = 7-cyano-7-deazaguanine + 2 NADPH + 3 H(+). The protein operates within tRNA modification; tRNA-queuosine biosynthesis. In terms of biological role, catalyzes the NADPH-dependent reduction of 7-cyano-7-deazaguanine (preQ0) to 7-aminomethyl-7-deazaguanine (preQ1). This Escherichia coli (strain SMS-3-5 / SECEC) protein is NADPH-dependent 7-cyano-7-deazaguanine reductase.